Reading from the N-terminus, the 203-residue chain is High frequency lysogenization protein HflD homolog (203 aa).

The protein belongs to the HflD family.

The protein resides in the cytoplasm. It is found in the cell inner membrane. The chain is High frequency lysogenization protein HflD homolog from Aeromonas salmonicida (strain A449).